The primary structure comprises 107 residues: Vasopressin-neurophysin 2 (107 aa).

A disulfide bond links Cys1 and Cys6. Gly9 is subject to Glycine amide. 7 disulfides stabilise this stretch: Cys22/Cys66, Cys25/Cys39, Cys33/Cys56, Cys40/Cys46, Cys73/Cys85, Cys79/Cys97, and Cys86/Cys91.

It belongs to the vasopressin/oxytocin family. Interacts with vasopressin receptors V1bR/AVPR1B (Ki=85 pM), V1aR/AVPR1A (Ki=0.6 nM) and V2R/AVPR2 (Ki=4.9 nM). Interacts with oxytocin receptor (OXTR) (Ki=110 nM).

Its subcellular location is the secreted. Functionally, neurophysin 2 specifically binds vasopressin. Its function is as follows. Vasopressin has a direct antidiuretic action on the kidney, it also causes vasoconstriction of the peripheral vessels. Acts by binding to vasopressin receptors (V1bR/AVPR1B, V1aR/AVPR1A, and V2R/AVPR2). This chain is Vasopressin-neurophysin 2 (AVP), found in Balaenoptera physalus (Fin whale).